The chain runs to 315 residues: tRNA pseudouridine synthase B (315 aa).

Residue Asp54 is the Nucleophile of the active site.

It belongs to the pseudouridine synthase TruB family. Type 1 subfamily.

The catalysed reaction is uridine(55) in tRNA = pseudouridine(55) in tRNA. Responsible for synthesis of pseudouridine from uracil-55 in the psi GC loop of transfer RNAs. The sequence is that of tRNA pseudouridine synthase B from Cupriavidus taiwanensis (strain DSM 17343 / BCRC 17206 / CCUG 44338 / CIP 107171 / LMG 19424 / R1) (Ralstonia taiwanensis (strain LMG 19424)).